The primary structure comprises 496 residues: MCDVLTIRDLSKSFARNRVLNGVNFRMGKGAVVGLMGENGAGKSTLMKCLFGMYAKDTGQILVDGSPVDFQSPKEALENGVAMVHQELNQCLDRTVMDNLFLGRYPARFGIVDEKRMFDDSLTLFASLKMDVNPRAVMRSMSVSQRQMVEIAKAMSYNAKIIVLDEPTSSLTEREIVRLFAIIRDLSKKGVAFIYISHKMDEIFQICSEVIVLRDGVLTLSQSIGEVEMSDLITAMVGRTLDKRFPDADNTVGDDYLEIRGLSTRYAPQLRDISLSVKRGEIFGLYGLVGAGRSELLEAIFGLRTIADGEISLAGKKIRLKSSRDAMKLNFAFVPEERKLNGMFAKGSIEYNTTIANLPAYKRYGLLSKKKLQEAAEREIKAMRVKCVSPSELISALSGGNQQKVIIGKWLERDPDVLLLDEPTRGIDVGAKYEIYQLIIRMAREGKTIIVVSSEMPEILGITNRIAVMSNYRLAGIVDTKSTDQEALLRLSARYL.

ABC transporter domains lie at 5–240 (LTIR…VGRT) and 243–496 (KRFP…ARYL). Residue 37–44 (GENGAGKS) participates in ATP binding.

Belongs to the ABC transporter superfamily. Galactose/methyl galactoside importer (TC 3.A.1.2.3) family. As to quaternary structure, the complex is composed of one ATP-binding protein (MglA), two transmembrane proteins (MglC) and a solute-binding protein (MglB).

It localises to the cell inner membrane. The catalysed reaction is D-galactose(out) + ATP + H2O = D-galactose(in) + ADP + phosphate + H(+). The enzyme catalyses methyl beta-D-galactoside(out) + ATP + H2O = methyl beta-D-galactoside(in) + ADP + phosphate + H(+). Part of the ABC transporter complex MglABC involved in galactose/methyl galactoside import. Responsible for energy coupling to the transport system. The sequence is that of Galactose/methyl galactoside import ATP-binding protein MglA from Treponema pallidum (strain Nichols).